The following is a 314-amino-acid chain: Probable phytol kinase 1, chloroplastic (314 aa).

The N-terminal 62 residues, 1-62 (MAAAARPVDV…GVGAAAAPAV (62 aa)), are a transit peptide targeting the chloroplast. Helical transmembrane passes span 72–91 (AALRDCAATLLITAGAYSLV), 111–131 (IVHVLSGVLFMSSWPLFSNST), 135–155 (FFAAIVPLLNCIRLLTYGLRL), 181–201 (YVIVLLVSVLVFWRQSPIGIV), 234–254 (IGSISMFISGFLLSALMLFYF), 266–286 (LALGKLALVALAATVVECIPV), and 294–314 (ISVPLATMLAAYLLFGYSSCC).

It belongs to the polyprenol kinase family.

It localises to the plastid. The protein resides in the chloroplast membrane. The catalysed reaction is phytol + CTP = phytyl phosphate + CDP + H(+). The protein operates within cofactor biosynthesis; tocopherol biosynthesis. Its function is as follows. Involved in the activation and reutilization of phytol from chlorophyll degradation in plant metabolism, including tocopherol biosynthesis. Catalyzes the conversion of phytol to phytol monophosphate (PMP). The protein is Probable phytol kinase 1, chloroplastic of Oryza sativa subsp. japonica (Rice).